Here is a 457-residue protein sequence, read N- to C-terminus: Bifunctional protein GlmU (457 aa).

Residues 1–227 (MTQLSVVILA…FMEVEGANNR (227 aa)) form a pyrophosphorylase region. Residues 9–12 (LAAG), K23, Q74, 79–80 (GT), 101–103 (YGD), G138, E152, N167, and N225 contribute to the UDP-N-acetyl-alpha-D-glucosamine site. D103 contributes to the Mg(2+) binding site. Position 225 (N225) interacts with Mg(2+). Residues 228–248 (LQLAALERFYQKTQAEKLLLA) form a linker region. The interval 249-457 (GVRLIDPARF…QRPTKKKIAD (209 aa)) is N-acetyltransferase. Residues R331 and K349 each contribute to the UDP-N-acetyl-alpha-D-glucosamine site. H361 (proton acceptor) is an active-site residue. UDP-N-acetyl-alpha-D-glucosamine contacts are provided by Y364 and N375. Acetyl-CoA-binding positions include A378, 384 to 385 (NY), S403, A421, and R438.

In the N-terminal section; belongs to the N-acetylglucosamine-1-phosphate uridyltransferase family. This sequence in the C-terminal section; belongs to the transferase hexapeptide repeat family. In terms of assembly, homotrimer. It depends on Mg(2+) as a cofactor.

The protein resides in the cytoplasm. It carries out the reaction alpha-D-glucosamine 1-phosphate + acetyl-CoA = N-acetyl-alpha-D-glucosamine 1-phosphate + CoA + H(+). The catalysed reaction is N-acetyl-alpha-D-glucosamine 1-phosphate + UTP + H(+) = UDP-N-acetyl-alpha-D-glucosamine + diphosphate. The protein operates within nucleotide-sugar biosynthesis; UDP-N-acetyl-alpha-D-glucosamine biosynthesis; N-acetyl-alpha-D-glucosamine 1-phosphate from alpha-D-glucosamine 6-phosphate (route II): step 2/2. Its pathway is nucleotide-sugar biosynthesis; UDP-N-acetyl-alpha-D-glucosamine biosynthesis; UDP-N-acetyl-alpha-D-glucosamine from N-acetyl-alpha-D-glucosamine 1-phosphate: step 1/1. It functions in the pathway bacterial outer membrane biogenesis; LPS lipid A biosynthesis. Its function is as follows. Catalyzes the last two sequential reactions in the de novo biosynthetic pathway for UDP-N-acetylglucosamine (UDP-GlcNAc). The C-terminal domain catalyzes the transfer of acetyl group from acetyl coenzyme A to glucosamine-1-phosphate (GlcN-1-P) to produce N-acetylglucosamine-1-phosphate (GlcNAc-1-P), which is converted into UDP-GlcNAc by the transfer of uridine 5-monophosphate (from uridine 5-triphosphate), a reaction catalyzed by the N-terminal domain. In Actinobacillus pleuropneumoniae serotype 5b (strain L20), this protein is Bifunctional protein GlmU.